The primary structure comprises 210 residues: Regulator of G-protein signaling 17 (210 aa).

The disordered stretch occupies residues 1–21 (MRKRQQSQNEGTQAVSQAPGN). The region spanning 84–200 (NFDKMMKTPA…LNSQIYKAFV (117 aa)) is the RGS domain. Residue tyrosine 137 is modified to Phosphotyrosine.

In terms of assembly, interacts with GNAI1 and GNAQ. Interacts with GNAZ and GNAI2. Interacts with OPRM1. Forms a complex with mu-opioid receptors and G(alpha)z/i2 subunits, including GNAZ and GNAI2; the formation of this complex results in mu-opioid receptor desensitization. Interacts with HINT1. In terms of processing, N- and O-glycosylated in synapsomal membranes. Post-translationally, serine phosphorylated in synapsomal membranes. Sumoylated with SUMO1 and SUM02 in synaptosomes. The sumoylated forms act as a scaffold for sequestering mu-opioid receptor-activated G(alpha) subunits. Desumoylated by HINT1. Detected in brain (at protein level). Highly expressed in the hypothalamus, periaqueductal gray matter, and pons-medulla. Lower levels in the thalamus, cortex and spinal cord. Weak expression in the striatum and cerebellum.

The protein localises to the membrane. The protein resides in the synapse. It is found in the synaptosome. Its subcellular location is the nucleus. It localises to the cytoplasm. In terms of biological role, regulates G protein-coupled receptor signaling cascades, including signaling via muscarinic acetylcholine receptor CHRM2 and dopamine receptor DRD2. Inhibits signal transduction by increasing the GTPase activity of G protein alpha subunits, thereby driving them into their inactive GDP-bound form. Binds selectively to GNAZ and GNAI2 subunits, accelerates their GTPase activity and regulates their signaling activities. Negatively regulates mu-opioid receptor-mediated activation of the G-proteins. The sequence is that of Regulator of G-protein signaling 17 (Rgs17) from Mus musculus (Mouse).